The sequence spans 730 residues: 1,4-alpha-glucan branching enzyme GlgB (730 aa).

The Nucleophile role is filled by Asp405. Glu458 (proton donor) is an active-site residue.

Belongs to the glycosyl hydrolase 13 family. GlgB subfamily. In terms of assembly, monomer.

The enzyme catalyses Transfers a segment of a (1-&gt;4)-alpha-D-glucan chain to a primary hydroxy group in a similar glucan chain.. It participates in glycan biosynthesis; glycogen biosynthesis. Its function is as follows. Catalyzes the formation of the alpha-1,6-glucosidic linkages in glycogen by scission of a 1,4-alpha-linked oligosaccharide from growing alpha-1,4-glucan chains and the subsequent attachment of the oligosaccharide to the alpha-1,6 position. This chain is 1,4-alpha-glucan branching enzyme GlgB, found in Haemophilus influenzae (strain 86-028NP).